We begin with the raw amino-acid sequence, 302 residues long: AT-hook motif nuclear-localized protein 29 (302 aa).

The tract at residues 1 to 95 (MDGGYDQSGG…KPPVIVTRDS (95 aa)) is disordered. The span at 32-44 (QLHPLPQPQPQPQ) shows a compositional bias: pro residues. Residues 72 to 84 (KRPRGRPPGSKNK) constitute a DNA-binding region (a.T hook). Residues 96-241 (PNVLRSHVLE…DEGGEGGEGG (146 aa)) enclose the PPC domain. Residues 164-169 (GRFEIL) are required for the binding to non-AHL interactors. Residues 229–279 (PLEDEGGEGGEGGEVGEGGGGEGGPPPATSSSPPSGAGQGQLRGNMSGYDQ) form a disordered region. Residues 237-251 (GGEGGEVGEGGGGEG) show a composition bias toward gly residues.

In terms of assembly, homodimer. Interacts with AHL5, AHL12, AHL25, AHL27, TCP4, TCP13 and EF114. As to expression, expressed in the hypocotyl and the vascular tissue of seedling.

The protein localises to the nucleus. In terms of biological role, transcription factor that specifically binds AT-rich DNA sequences related to the nuclear matrix attachment regions (MARs). Acts redundantly with AHL18, AHL22 and AHL27 in the regulation of flowering and regulation of the hypocotyl elongation. Acts redundantly with AHL27/ESC to modulate hypocotyl growth inhibition in response to light. This is AT-hook motif nuclear-localized protein 29 from Arabidopsis thaliana (Mouse-ear cress).